The sequence spans 155 residues: Ribosomal RNA large subunit methyltransferase H (155 aa).

S-adenosyl-L-methionine is bound by residues L72, G103, and 122–127 (LSPLTL).

It belongs to the RNA methyltransferase RlmH family. As to quaternary structure, homodimer.

Its subcellular location is the cytoplasm. The catalysed reaction is pseudouridine(1915) in 23S rRNA + S-adenosyl-L-methionine = N(3)-methylpseudouridine(1915) in 23S rRNA + S-adenosyl-L-homocysteine + H(+). Its function is as follows. Specifically methylates the pseudouridine at position 1915 (m3Psi1915) in 23S rRNA. The chain is Ribosomal RNA large subunit methyltransferase H from Histophilus somni (strain 2336) (Haemophilus somnus).